Consider the following 449-residue polypeptide: Bifunctional protein GlmU (449 aa).

Positions 1–226 are pyrophosphorylase; it reads MNNIHAIILA…KFEVLGVNDK (226 aa). UDP-N-acetyl-alpha-D-glucosamine is bound by residues 9 to 12, K23, Q73, 78 to 79, 100 to 102, G137, E151, N166, and N224; these read LAAG, GT, and YGD. D102 serves as a coordination point for Mg(2+). Residue N224 coordinates Mg(2+). Residues 227–247 are linker; that stretch reads VQLAELERLFQKDQAIQFMKQ. The N-acetyltransferase stretch occupies residues 248–449; it reads GLGLKDPTRF…QKNLKYRSKK (202 aa). Residues R330 and K348 each coordinate UDP-N-acetyl-alpha-D-glucosamine. Catalysis depends on H360, which acts as the Proton acceptor. Positions 363 and 374 each coordinate UDP-N-acetyl-alpha-D-glucosamine. Residues A377, 383–384, S402, A420, and R437 each bind acetyl-CoA; that span reads NY.

The protein in the N-terminal section; belongs to the N-acetylglucosamine-1-phosphate uridyltransferase family. This sequence in the C-terminal section; belongs to the transferase hexapeptide repeat family. As to quaternary structure, homotrimer. It depends on Mg(2+) as a cofactor.

The protein resides in the cytoplasm. The enzyme catalyses alpha-D-glucosamine 1-phosphate + acetyl-CoA = N-acetyl-alpha-D-glucosamine 1-phosphate + CoA + H(+). The catalysed reaction is N-acetyl-alpha-D-glucosamine 1-phosphate + UTP + H(+) = UDP-N-acetyl-alpha-D-glucosamine + diphosphate. The protein operates within nucleotide-sugar biosynthesis; UDP-N-acetyl-alpha-D-glucosamine biosynthesis; N-acetyl-alpha-D-glucosamine 1-phosphate from alpha-D-glucosamine 6-phosphate (route II): step 2/2. It functions in the pathway nucleotide-sugar biosynthesis; UDP-N-acetyl-alpha-D-glucosamine biosynthesis; UDP-N-acetyl-alpha-D-glucosamine from N-acetyl-alpha-D-glucosamine 1-phosphate: step 1/1. Its pathway is bacterial outer membrane biogenesis; LPS lipid A biosynthesis. Its function is as follows. Catalyzes the last two sequential reactions in the de novo biosynthetic pathway for UDP-N-acetylglucosamine (UDP-GlcNAc). The C-terminal domain catalyzes the transfer of acetyl group from acetyl coenzyme A to glucosamine-1-phosphate (GlcN-1-P) to produce N-acetylglucosamine-1-phosphate (GlcNAc-1-P), which is converted into UDP-GlcNAc by the transfer of uridine 5-monophosphate (from uridine 5-triphosphate), a reaction catalyzed by the N-terminal domain. This chain is Bifunctional protein GlmU, found in Vesicomyosocius okutanii subsp. Calyptogena okutanii (strain HA).